A 200-amino-acid chain; its full sequence is Recombination protein RecR (200 aa).

A C4-type zinc finger spans residues 58–75; that stretch reads CSNCFCLKISQTSPCNFC. One can recognise a Toprim domain in the interval 82-177; the sequence is SSLCIVATPK…KISRLALGMP (96 aa).

This sequence belongs to the RecR family.

In terms of biological role, may play a role in DNA repair. It seems to be involved in an RecBC-independent recombinational process of DNA repair. It may act with RecF and RecO. This Chlamydia trachomatis serovar D (strain ATCC VR-885 / DSM 19411 / UW-3/Cx) protein is Recombination protein RecR.